We begin with the raw amino-acid sequence, 196 residues long: Phosphoheptose isomerase (196 aa).

The SIS domain maps to 36-196 (MVACLMNEGK…AVDYMLLGGD (161 aa)). Residue 51–53 (NGG) participates in substrate binding. Zn(2+)-binding residues include H60 and E64. Substrate-binding positions include E64, 93 to 94 (ND), 119 to 121 (STS), S124, and Q174. Positions 174 and 182 each coordinate Zn(2+).

It belongs to the SIS family. GmhA subfamily. Homotetramer. Requires Zn(2+) as cofactor.

It is found in the cytoplasm. It catalyses the reaction 2 D-sedoheptulose 7-phosphate = D-glycero-alpha-D-manno-heptose 7-phosphate + D-glycero-beta-D-manno-heptose 7-phosphate. The protein operates within carbohydrate biosynthesis; D-glycero-D-manno-heptose 7-phosphate biosynthesis; D-glycero-alpha-D-manno-heptose 7-phosphate and D-glycero-beta-D-manno-heptose 7-phosphate from sedoheptulose 7-phosphate: step 1/1. Catalyzes the isomerization of sedoheptulose 7-phosphate in D-glycero-D-manno-heptose 7-phosphate. This is Phosphoheptose isomerase from Laribacter hongkongensis (strain HLHK9).